The primary structure comprises 202 residues: MRLERLNYNKIKIFLTFDDLSERGLTKEDLWRNAPKVQQLFRDMMQEANKELGFEADGPIAVEVFSLQAQGMVVIVTKENQEMDTDDEFRDEFIEMQVTLDESEHILYEFATLDDVINLSNRLYNLGVTGGKLYTWDERFYLWVEEEEQIQLLKADFIAILAEYGNPSTATIYRIMEYGKELMDVNAIEQIHNYFVKKQNLS.

This sequence belongs to the MecA family. In terms of assembly, homodimer.

Its function is as follows. Enables the recognition and targeting of unfolded and aggregated proteins to the ClpC protease or to other proteins involved in proteolysis. Acts negatively in the development of competence by binding ComK and recruiting it to the ClpCP protease. When overexpressed, inhibits sporulation. Also involved in Spx degradation by ClpC. This chain is Adapter protein MecA 2 (mecA2), found in Bacillus cereus (strain ATCC 14579 / DSM 31 / CCUG 7414 / JCM 2152 / NBRC 15305 / NCIMB 9373 / NCTC 2599 / NRRL B-3711).